We begin with the raw amino-acid sequence, 71 residues long: Serine palmitoyltransferase small subunit A (71 aa).

Topologically, residues 1–12 are cytoplasmic; sequence MAGMALARAWKQ. Residues 13–29 form a helical membrane-spanning segment; that stretch reads MSWFYYQYLLVTALYML. Over 30–34 the chain is Lumenal; sequence EPWER. Residues 35-57 traverse the membrane as a helical segment; it reads TVFNSMLVSVVGMALYTGYVFMP. Over 58-71 the chain is Cytoplasmic; the sequence is QHIMAILHYFEIVQ.

The protein belongs to the SPTSS family. SPTSSA subfamily. Component of the serine palmitoyltransferase (SPT) complex, which is composed of SPTLC1, SPTLC2 or SPTLC3 and SPTSSA or SPTSSB. The heterodimer consisting of SPTLC1 and SPTLC2/SPTLC3 forms the catalytic core of the enzyme, while SPTSSA or SPTSSB subunits determine substrate specificity. SPT also interacts with ORMDL proteins, especially ORMDL3, which negatively regulate SPT activity in the presence of ceramides. Interacts with MBOAT7; the interaction plays a role in MBOAT7 localization to mitochondria-associated membranes.

It is found in the endoplasmic reticulum membrane. The protein operates within lipid metabolism; sphingolipid metabolism. Functionally, component of the serine palmitoyltransferase multisubunit enzyme (SPT) that catalyzes the initial and rate-limiting step in sphingolipid biosynthesis by condensing L-serine and activated acyl-CoA (most commonly palmitoyl-CoA) to form long-chain bases. The SPT complex is composed of SPTLC1, SPTLC2 or SPTLC3 and SPTSSA or SPTSSB. Within this complex, the heterodimer consisting of SPTLC1 and SPTLC2/SPTLC3 forms the catalytic core. Within the SPT complex, SPTSSA stimulates the catalytic activity and plays a role in substrate specificity, which depends upon the overall complex composition. The SPTLC1-SPTLC2-SPTSSA complex shows a strong preference for C16-CoA substrate, while the SPTLC1-SPTLC3-SPTSSA isozyme uses both C14-CoA and C16-CoA as substrates, with a slight preference for C14-CoA. Independently of its action as a SPT component, may be involved in MBOAT7 localization to mitochondria-associated membranes, a membrane bridge between the endoplasmic reticulum and mitochondria, may hence affect MBOAT7-catalyzed incorporation of arachidonic acid into phosphatidylinositol. The sequence is that of Serine palmitoyltransferase small subunit A from Mus musculus (Mouse).